The chain runs to 343 residues: T-cell immunoglobulin and mucin domain-containing protein 4 (343 aa).

The first 22 residues, 1–22 (MSKGLLLLWLVTELWWLYLTPA), serve as a signal peptide directing secretion. The Ig-like V-type domain occupies 23–128 (ASEDTIIGFL…WFNDVKKNVR (106 aa)). Residues 23–279 (ASEDTIIGFL…KSHQINSRQT (257 aa)) are Extracellular-facing. Disulfide bonds link Cys40-Cys112, Cys53-Cys64, and Cys59-Cys111. N-linked (GlcNAc...) asparagine glycosylation occurs at Asn220. The interval 239 to 258 (TGSNPGILPSTSQLTTQKTT) is disordered. The span at 248–258 (STSQLTTQKTT) shows a compositional bias: low complexity. Residues 280-300 (ILIIACCVGFVLMVLLFLAFL) traverse the membrane as a helical segment. The Cytoplasmic segment spans residues 301–343 (LRGKVTGANCLQRHKRPDNTEDSDSVLNDMSHGRDDEDGIFTL). The interval 313 to 343 (RHKRPDNTEDSDSVLNDMSHGRDDEDGIFTL) is disordered. Ser323, Ser325, and Ser331 each carry phosphoserine.

It belongs to the immunoglobulin superfamily. TIM family. Homodimer. Predominantly expressed in lymphoid tissues, such as spleen, lymph nodes, and Peyer patches. Also expressed in fetal liver, salivary gland, and spleen stromal cells, predominantly in the marginal zone and to a lesser extent throughout the white pulp. Not expressed in bone marrow-derived cells. Expressed mainly by antigen presenting cells (APCs) in T- and B-cell areas, but not by T- or B-lymphocytes.

The protein resides in the membrane. Phosphatidylserine receptor that plays different role in immune response including phagocytosis of apoptotic cells and T-cell regulation. Controls T-cell activation in a bimodal fashion, decreasing the activation of naive T-cells by inducing cell cycle arrest, while increasing proliferation of activated T-cells by activating AKT1 and ERK1/2 phosphorylations and subsequent signaling pathways. Also plays a role in efferocytosis which is the process by which apoptotic cells are removed by phagocytic cells. Mechanistically, promotes the engulfment of apoptotic cells or exogenous particles by securing them to phagocytes through direct binding to phosphatidylserine present on apoptotic cells, while other engulfment receptors such as MERTK efficiently recognize apoptotic cells and mediate their ingestion. Additionally, promotes autophagy process by suppressing NLRP3 inflammasome activity via activation of STK11/PRKAA1 pathway in a phosphatidylserine-dependent mechanism. The protein is T-cell immunoglobulin and mucin domain-containing protein 4 (Timd4) of Mus musculus (Mouse).